We begin with the raw amino-acid sequence, 393 residues long: MTKLSRRVLEMEESVTLATSARAKTLKAQGRDVLELSLGQPDFVTPKNIQEAAMKSIRDGRASFYTIASGLPELKDAISQYFEKFYGYSVERKQIVVGTGAKFILYALFAAVINPKDEVIIPTPFWVSYADQIKMNDGVPVFIRTSEENHFKATVEQLEAARTNKTKMIVLNSPSNPTGMIYSKKELEAIGNWAVKHDILILSDDIYGRLVYNGARFTPISTISQPICQQTIVINGVSKTYSMTGWRVGYAVGDPEIIGAMSKIVSQTTSNLTTAAQYAAIEALIGNQDTVEVMRQAFEERLNTIYPLLAKVPGFHVVKPEGAFYFFPNVKKAMEMKGYTDVTEFTTALLEETGVALVTGAGFGAPENVRLSYATDMVTLKEAINRIQAFMEK.

Residues glycine 39, tryptophan 126, and asparagine 176 each contribute to the L-asparagine site. Residue lysine 239 is modified to N6-(pyridoxal phosphate)lysine. Arginine 370 contributes to the L-asparagine binding site.

The protein belongs to the class-I pyridoxal-phosphate-dependent aminotransferase family. It depends on pyridoxal 5'-phosphate as a cofactor.

The catalysed reaction is a 2-oxocarboxylate + L-asparagine = 2-oxosuccinamate + an L-alpha-amino acid. The enzyme catalyses L-asparagine + 2-oxoglutarate = 2-oxosuccinamate + L-glutamate. Functionally, catalyzes the transamination reaction between L-asparagine and 2-oxoglutarate to produce L-glutamate and 2-oxosuccinamate. Is not active with pyruvate as amine acceptor. May also use other amino acids as substrates. This Streptococcus mutans serotype c (strain ATCC 700610 / UA159) protein is Asparagine--oxo-acid transaminase.